We begin with the raw amino-acid sequence, 586 residues long: Serine/threonine-protein kinase TDA1 (586 aa).

The tract at residues 1–26 is disordered; that stretch reads MTTASSSASQLQQRLPEEKPWPQLSG. Residues 39–351 form the Protein kinase domain; the sequence is VTNHNSLGDG…AKNLKQHPFI (313 aa). ATP is bound by residues 45–53 and Lys68; that span reads LGDGNFSVV. The active-site Proton acceptor is Asp180. The interval 503–524 is disordered; it reads TTPESRSNFNTPKTLSRQGSST. Thr504 carries the post-translational modification Phosphothreonine. 2 positions are modified to phosphoserine: Ser509 and Ser518. Thr538 bears the Phosphothreonine mark. Position 578 is a phosphoserine (Ser578).

The protein belongs to the protein kinase superfamily. Ser/Thr protein kinase family. As to quaternary structure, interacts with RIM11.

The protein localises to the cytoplasm. Its subcellular location is the nucleus. The catalysed reaction is L-seryl-[protein] + ATP = O-phospho-L-seryl-[protein] + ADP + H(+). It catalyses the reaction L-threonyl-[protein] + ATP = O-phospho-L-threonyl-[protein] + ADP + H(+). Its function is as follows. Serine/threonine protein kinase shown to have protein phosphorylation activity in vitro. The chain is Serine/threonine-protein kinase TDA1 (TDA1) from Saccharomyces cerevisiae (strain ATCC 204508 / S288c) (Baker's yeast).